We begin with the raw amino-acid sequence, 313 residues long: Oxaloacetate tautomerase Fahd2a, mitochondrial (313 aa).

The transit peptide at methionine 1–leucine 84 directs the protein to the mitochondrion. Positions 159, 161, and 190 each coordinate Mg(2+). Lysine 202 carries the post-translational modification N6-acetyllysine; alternate. At lysine 202 the chain carries N6-succinyllysine; alternate. Lysine 233 is subject to N6-acetyllysine.

It belongs to the FAH family. Mg(2+) is required as a cofactor. It depends on Mn(2+) as a cofactor.

The protein resides in the mitochondrion. The enzyme catalyses oxaloacetate = enol-oxaloacetate. Tautomerase that converts enol-oxaloacetate, a strong inhibitor of succinate dehydrogenase, to the physiological keto form of oxaloacetate. It is thereby required to maximize aerobic respiration efficiency by preventing succinate dehydrogenase inhibition. The polypeptide is Oxaloacetate tautomerase Fahd2a, mitochondrial (Rattus norvegicus (Rat)).